The sequence spans 211 residues: Glycerol-3-phosphate acyltransferase (211 aa).

A run of 6 helical transmembrane segments spans residues 10 to 30 (FYTW…FGLL), 63 to 83 (TLTL…IKFL), 90 to 110 (SIII…PIWL), 126 to 146 (LGYY…FFIL), 152 to 172 (LSAL…YPHL), and 174 to 194 (AHCI…ANIA).

This sequence belongs to the PlsY family. In terms of assembly, probably interacts with PlsX.

It is found in the cell inner membrane. The catalysed reaction is an acyl phosphate + sn-glycerol 3-phosphate = a 1-acyl-sn-glycero-3-phosphate + phosphate. It functions in the pathway lipid metabolism; phospholipid metabolism. Functionally, catalyzes the transfer of an acyl group from acyl-phosphate (acyl-PO(4)) to glycerol-3-phosphate (G3P) to form lysophosphatidic acid (LPA). This enzyme utilizes acyl-phosphate as fatty acyl donor, but not acyl-CoA or acyl-ACP. This Bartonella quintana (strain Toulouse) (Rochalimaea quintana) protein is Glycerol-3-phosphate acyltransferase.